Consider the following 437-residue polypeptide: Elongation factor 1-gamma (437 aa).

Ala-2 carries the N-acetylalanine modification. The GST N-terminal domain maps to 2 to 87 (AAGTLYTYPE…YVSNEELRGS (86 aa)). Residues 88 to 216 (TPEAAAQVVQ…VKLCEKMAQF (129 aa)) form the GST C-terminal domain. N6-acetyllysine occurs at positions 147 and 212. Over residues 221–254 (FAESQPKKDTPRKEKGSREEKQKPQAERKEEKKA) the composition is skewed to basic and acidic residues. Residues 221 to 268 (FAESQPKKDTPRKEKGSREEKQKPQAERKEEKKAAAPAPEEEMDECEQ) form a disordered region. Residue Lys-253 forms a Glycyl lysine isopeptide (Lys-Gly) (interchain with G-Cter in SUMO1) linkage. The EF-1-gamma C-terminal domain occupies 276 to 437 (AKDPFAHLPK…KAFNQGKIFK (162 aa)). Lys-285 participates in a covalent cross-link: Glycyl lysine isopeptide (Lys-Gly) (interchain with G-Cter in SUMO2). An N6-acetyllysine modification is found at Lys-401. Lys-434 is subject to N6-acetyllysine; alternate. Residue Lys-434 is modified to N6-malonyllysine; alternate.

EF-1 is composed of four subunits: alpha, beta, delta, and gamma.

Functionally, probably plays a role in anchoring the complex to other cellular components. The protein is Elongation factor 1-gamma (EEF1G) of Equus caballus (Horse).